A 211-amino-acid chain; its full sequence is MKPNFDPTLYLVTDRGCLAGRDLLDVVGRAVAGGAKLVQLREKNACTREFVELARALVGLVRPLGARLVINDRVDVALACDADGVHVGQDDMRPADVRALIGPDRLLGLSVTGEDEARAARGEPVDYLGAGPVFATATKKDAGAPQGIEGLIRMIALAEVPVVAIGAVTAANAAAVMAAGAAGLAMVSAICAAPDPEAAARELRVIAEQGR.

4-amino-2-methyl-5-(diphosphooxymethyl)pyrimidine is bound by residues 39–43 and Asn-71; that span reads QLREK. Residues Asp-72 and Asp-91 each contribute to the Mg(2+) site. Ser-110 is a 4-amino-2-methyl-5-(diphosphooxymethyl)pyrimidine binding site. 136-138 provides a ligand contact to 2-[(2R,5Z)-2-carboxy-4-methylthiazol-5(2H)-ylidene]ethyl phosphate; the sequence is TAT. Residue Lys-139 participates in 4-amino-2-methyl-5-(diphosphooxymethyl)pyrimidine binding. 2-[(2R,5Z)-2-carboxy-4-methylthiazol-5(2H)-ylidene]ethyl phosphate is bound by residues Ala-167 and 187-188; that span reads VS.

The protein belongs to the thiamine-phosphate synthase family. Requires Mg(2+) as cofactor.

It catalyses the reaction 2-[(2R,5Z)-2-carboxy-4-methylthiazol-5(2H)-ylidene]ethyl phosphate + 4-amino-2-methyl-5-(diphosphooxymethyl)pyrimidine + 2 H(+) = thiamine phosphate + CO2 + diphosphate. The catalysed reaction is 2-(2-carboxy-4-methylthiazol-5-yl)ethyl phosphate + 4-amino-2-methyl-5-(diphosphooxymethyl)pyrimidine + 2 H(+) = thiamine phosphate + CO2 + diphosphate. It carries out the reaction 4-methyl-5-(2-phosphooxyethyl)-thiazole + 4-amino-2-methyl-5-(diphosphooxymethyl)pyrimidine + H(+) = thiamine phosphate + diphosphate. It participates in cofactor biosynthesis; thiamine diphosphate biosynthesis; thiamine phosphate from 4-amino-2-methyl-5-diphosphomethylpyrimidine and 4-methyl-5-(2-phosphoethyl)-thiazole: step 1/1. Its function is as follows. Condenses 4-methyl-5-(beta-hydroxyethyl)thiazole monophosphate (THZ-P) and 2-methyl-4-amino-5-hydroxymethyl pyrimidine pyrophosphate (HMP-PP) to form thiamine monophosphate (TMP). The protein is Thiamine-phosphate synthase of Solidesulfovibrio magneticus (strain ATCC 700980 / DSM 13731 / RS-1) (Desulfovibrio magneticus).